The following is a 202-amino-acid chain: Arenicin-1 (202 aa).

A signal peptide spans 1–25 (MTSTQSVAVCATLILAIFCVNDIHC). The propeptide occupies 26 to 181 (DPIAEARAAA…SGDNNEPEKR (156 aa)). The BRICHOS domain maps to 73-168 (GDGVEGSVMV…ACQGKSVYWL (96 aa)). 2 cysteine pairs are disulfide-bonded: Cys-100–Cys-160 and Cys-184–Cys-201.

In terms of biological role, has antimicrobial activity against the Gram-negative bacteria E.coli and P.mirabilis, the Gram-positive bacterium L.monocytogenes and the yeast C.albicans. This chain is Arenicin-1, found in Arenicola marina (Lugworm).